The primary structure comprises 102 residues: uncharacterized protein (102 aa).

Residues 48 to 102 form the HTH cro/C1-type domain; it reads LNDKRKSLGIELSMLELQTGVSISTLNRLFQDPSQVRFTTVFLVAQTLGVSLCAI. A DNA-binding region (H-T-H motif) is located at residues 59-78; it reads LSMLELQTGVSISTLNRLFQ.

This is an uncharacterized protein from Haemophilus influenzae (strain ATCC 51907 / DSM 11121 / KW20 / Rd).